The primary structure comprises 205 residues: Imidazoleglycerol-phosphate dehydratase (205 aa).

The segment at 1–27 (MKQASPRAGGAKARRGQVARKTKETDV) is disordered.

Belongs to the imidazoleglycerol-phosphate dehydratase family.

Its subcellular location is the cytoplasm. It carries out the reaction D-erythro-1-(imidazol-4-yl)glycerol 3-phosphate = 3-(imidazol-4-yl)-2-oxopropyl phosphate + H2O. Its pathway is amino-acid biosynthesis; L-histidine biosynthesis; L-histidine from 5-phospho-alpha-D-ribose 1-diphosphate: step 6/9. This is Imidazoleglycerol-phosphate dehydratase from Anaeromyxobacter sp. (strain Fw109-5).